A 336-amino-acid polypeptide reads, in one-letter code: Quinolinate synthase (336 aa).

Positions 25 and 42 each coordinate iminosuccinate. C86 serves as a coordination point for [4Fe-4S] cluster. Iminosuccinate-binding positions include 117–119 and S138; that span reads YIN. [4Fe-4S] cluster is bound at residue C198. Iminosuccinate contacts are provided by residues 224–226 and T241; that span reads HPE. Residue C288 participates in [4Fe-4S] cluster binding.

This sequence belongs to the quinolinate synthase family. Type 3 subfamily. [4Fe-4S] cluster is required as a cofactor.

It localises to the cytoplasm. The catalysed reaction is iminosuccinate + dihydroxyacetone phosphate = quinolinate + phosphate + 2 H2O + H(+). Its pathway is cofactor biosynthesis; NAD(+) biosynthesis; quinolinate from iminoaspartate: step 1/1. Catalyzes the condensation of iminoaspartate with dihydroxyacetone phosphate to form quinolinate. The chain is Quinolinate synthase from Helicobacter pylori (strain HPAG1).